A 105-amino-acid polypeptide reads, in one-letter code: dATP/dGTP diphosphohydrolase (105 aa).

The protein belongs to the Caudovirales dATP/dGTP diphosphohydrolase family. Requires Co(2+) as cofactor.

The catalysed reaction is dGTP + H2O = dGMP + diphosphate + H(+). It carries out the reaction dATP + H2O = dAMP + diphosphate + H(+). It functions in the pathway purine metabolism. In terms of biological role, catalyzes the hydrolysis of dGTP into dGMP, which is needed among other for the first step of biosynthesis of dZTP (2-amino-2'-deoxyadenosine-5'-triphosphate). The protein is dATP/dGTP diphosphohydrolase of Cyanophage S-2L (Cyanobacteria phage S-2L).